Reading from the N-terminus, the 389-residue chain is Major outer membrane porin (389 aa).

The first 23 residues, 1–23 (MKKLLKSALLSAAFAGSVGSLQA), serve as a signal peptide directing secretion.

Belongs to the chlamydial porin (CP) (TC 1.B.2) family. In terms of assembly, part of a disulfide cross-linked outer membrane complex (COMC) composed of the major outer membrane porin (MOMP), the small cysteine-rich protein (OmcA) and the large cysteine-rich periplasmic protein (OmcB).

The protein resides in the cell outer membrane. Its function is as follows. In elementary bodies (EBs, the infectious stage, which is able to survive outside the host cell) provides the structural integrity of the outer envelope through disulfide cross-links with the small cysteine-rich protein and the large cysteine-rich periplasmic protein. It has been described in publications as the Sarkosyl-insoluble COMC (Chlamydia outer membrane complex), and serves as the functional equivalent of peptidoglycan. In terms of biological role, permits diffusion of specific solutes through the outer membrane. This Chlamydia pneumoniae (Chlamydophila pneumoniae) protein is Major outer membrane porin (ompA).